A 364-amino-acid chain; its full sequence is tRNA 2-selenouridine synthase (364 aa).

One can recognise a Rhodanese domain in the interval 14-137 (LIADTPIIDV…LRQAAIQATI (124 aa)). C97 acts as the S-selanylcysteine intermediate in catalysis.

Belongs to the SelU family. Monomer.

The enzyme catalyses 5-methylaminomethyl-2-thiouridine(34) in tRNA + selenophosphate + (2E)-geranyl diphosphate + H2O + H(+) = 5-methylaminomethyl-2-selenouridine(34) in tRNA + (2E)-thiogeraniol + phosphate + diphosphate. It catalyses the reaction 5-methylaminomethyl-2-thiouridine(34) in tRNA + (2E)-geranyl diphosphate = 5-methylaminomethyl-S-(2E)-geranyl-thiouridine(34) in tRNA + diphosphate. The catalysed reaction is 5-methylaminomethyl-S-(2E)-geranyl-thiouridine(34) in tRNA + selenophosphate + H(+) = 5-methylaminomethyl-2-(Se-phospho)selenouridine(34) in tRNA + (2E)-thiogeraniol. It carries out the reaction 5-methylaminomethyl-2-(Se-phospho)selenouridine(34) in tRNA + H2O = 5-methylaminomethyl-2-selenouridine(34) in tRNA + phosphate. In terms of biological role, involved in the post-transcriptional modification of the uridine at the wobble position (U34) of tRNA(Lys), tRNA(Glu) and tRNA(Gln). Catalyzes the conversion of 2-thiouridine (S2U-RNA) to 2-selenouridine (Se2U-RNA). Acts in a two-step process involving geranylation of 2-thiouridine (S2U) to S-geranyl-2-thiouridine (geS2U) and subsequent selenation of the latter derivative to 2-selenouridine (Se2U) in the tRNA chain. This chain is tRNA 2-selenouridine synthase, found in Shigella sonnei (strain Ss046).